Consider the following 297-residue polypeptide: Probable endonuclease 4 (297 aa).

Residues histidine 69, histidine 110, glutamate 145, aspartate 179, histidine 182, histidine 214, aspartate 227, histidine 229, and glutamate 259 each coordinate Zn(2+).

It belongs to the AP endonuclease 2 family. Zn(2+) serves as cofactor.

It carries out the reaction Endonucleolytic cleavage to 5'-phosphooligonucleotide end-products.. Functionally, endonuclease IV plays a role in DNA repair. It cleaves phosphodiester bonds at apurinic or apyrimidinic (AP) sites, generating a 3'-hydroxyl group and a 5'-terminal sugar phosphate. The chain is Probable endonuclease 4 from Listeria monocytogenes serotype 4b (strain CLIP80459).